Consider the following 1203-residue polypeptide: DNA-directed RNA polymerase subunit beta' (1203 aa).

C60, C62, C75, and C78 together coordinate Zn(2+). Mg(2+)-binding residues include D449, D451, and D453. Positions 818, 892, 899, and 902 each coordinate Zn(2+).

Belongs to the RNA polymerase beta' chain family. As to quaternary structure, the RNAP catalytic core consists of 2 alpha, 1 beta, 1 beta' and 1 omega subunit. When a sigma factor is associated with the core the holoenzyme is formed, which can initiate transcription. Requires Mg(2+) as cofactor. The cofactor is Zn(2+).

It catalyses the reaction RNA(n) + a ribonucleoside 5'-triphosphate = RNA(n+1) + diphosphate. Its function is as follows. DNA-dependent RNA polymerase catalyzes the transcription of DNA into RNA using the four ribonucleoside triphosphates as substrates. This Bacillus cereus (strain ATCC 14579 / DSM 31 / CCUG 7414 / JCM 2152 / NBRC 15305 / NCIMB 9373 / NCTC 2599 / NRRL B-3711) protein is DNA-directed RNA polymerase subunit beta'.